The primary structure comprises 426 residues: MLDLKMIRNHVEDVKAKLATRGVKPEAIDDLLAKDNERRELIVKSENLKKLRNEVSDQISQLKRNKEDANDKIQEMRKVSQDIKGLDEQLENIAEEVESKAAHLPNLPHEDVPVSLTEEGSVEQRRNGTPRTFDFTPKAHWEIGEELGILDFERAAKVAGSRFVYYVGDGARLERAVYNFFLDQNNAAGFTEEITPYMVNDASMFGTGQFPKFKETHAGYEVKDEGLTLIPTAEVPLVNYYRDEIIDEEKLPISVTALSPAFRSEAGSAGRDTRGLIRMHQFNKVEMVKIAKPEQSWNELEKLTTHAETLLQKLGLPYRVITLTTGDMSFTAAKTYDLEVWIPAQDKYREISSCSNCTDFQARRAHIRFRDENGKLQYVHTLNGSGLAVGRTVAAILENYQNEDGTVNVPEALVPYMQGTTVIGKK.

232-234 (TAE) is a binding site for L-serine. An ATP-binding site is contributed by 263-265 (RSE). Position 286 (Glu-286) interacts with L-serine. 350 to 353 (EISS) provides a ligand contact to ATP. An L-serine-binding site is contributed by Ser-385.

The protein belongs to the class-II aminoacyl-tRNA synthetase family. Type-1 seryl-tRNA synthetase subfamily. In terms of assembly, homodimer. The tRNA molecule binds across the dimer.

It localises to the cytoplasm. It carries out the reaction tRNA(Ser) + L-serine + ATP = L-seryl-tRNA(Ser) + AMP + diphosphate + H(+). The enzyme catalyses tRNA(Sec) + L-serine + ATP = L-seryl-tRNA(Sec) + AMP + diphosphate + H(+). The protein operates within aminoacyl-tRNA biosynthesis; selenocysteinyl-tRNA(Sec) biosynthesis; L-seryl-tRNA(Sec) from L-serine and tRNA(Sec): step 1/1. Catalyzes the attachment of serine to tRNA(Ser). Is also able to aminoacylate tRNA(Sec) with serine, to form the misacylated tRNA L-seryl-tRNA(Sec), which will be further converted into selenocysteinyl-tRNA(Sec). This chain is Serine--tRNA ligase, found in Pediococcus pentosaceus (strain ATCC 25745 / CCUG 21536 / LMG 10740 / 183-1w).